The following is a 367-amino-acid chain: MKILSLRLKNFRNYKEAEVSLSPDMNYIFGENAQGKTNLLEALYVLSLGRSFRTTHLTEAIFFGSSHFFLEMTFEKDGFCHTLSTYVDKQGKKILCDHSPIKTLSQLIGMVPIVLFSSKDRSLISGAPADRRLFLNLLLSQCDPQYKHTLSYYHRALLQRNTLLKTKQTSTLSVWDEQLATLGAYLTVSRYFCCEQLNQLVQELWSNSLSEQLRIKFKSSLIKQGNLSQEAIIEELRKQLTTALHRDLELGTTSVGPHREDFTLMINDLSVAQFSSEGQKHSLLAILRLAECLYIKNIYNACPLFCMDDIHAGLDNHRISQLLDLAPTLGQTLMTSTNIPHQSLSETSKIFSVNQAQISIHSHLIVN.

30–37 is a binding site for ATP; sequence GENAQGKT.

Belongs to the RecF family.

The protein resides in the cytoplasm. The RecF protein is involved in DNA metabolism; it is required for DNA replication and normal SOS inducibility. RecF binds preferentially to single-stranded, linear DNA. It also seems to bind ATP. The sequence is that of DNA replication and repair protein RecF from Chlamydia caviae (strain ATCC VR-813 / DSM 19441 / 03DC25 / GPIC) (Chlamydophila caviae).